The following is a 420-amino-acid chain: Gamma-glutamyl phosphate reductase (420 aa).

Belongs to the gamma-glutamyl phosphate reductase family.

The protein resides in the cytoplasm. The enzyme catalyses L-glutamate 5-semialdehyde + phosphate + NADP(+) = L-glutamyl 5-phosphate + NADPH + H(+). Its pathway is amino-acid biosynthesis; L-proline biosynthesis; L-glutamate 5-semialdehyde from L-glutamate: step 2/2. Its function is as follows. Catalyzes the NADPH-dependent reduction of L-glutamate 5-phosphate into L-glutamate 5-semialdehyde and phosphate. The product spontaneously undergoes cyclization to form 1-pyrroline-5-carboxylate. This is Gamma-glutamyl phosphate reductase from Streptococcus pneumoniae serotype 4 (strain ATCC BAA-334 / TIGR4).